An 87-amino-acid chain; its full sequence is Small ribosomal subunit protein uS19 (87 aa).

Belongs to the universal ribosomal protein uS19 family.

Its function is as follows. Protein S19 forms a complex with S13 that binds strongly to the 16S ribosomal RNA. In Mycoplasma pneumoniae (strain ATCC 29342 / M129 / Subtype 1) (Mycoplasmoides pneumoniae), this protein is Small ribosomal subunit protein uS19 (rpsS).